We begin with the raw amino-acid sequence, 698 residues long: Adhesion G protein-coupled receptor F4 (698 aa).

The N-terminal stretch at 1–19 (MKPWIAMVCCLVFFLTTEC) is a signal peptide. At 20–409 (SHSKPKTHRK…VKNTILNHIT (390 aa)) the chain is on the extracellular side. 7 N-linked (GlcNAc...) asparagine glycosylation sites follow: asparagine 61, asparagine 168, asparagine 213, asparagine 268, asparagine 290, asparagine 344, and asparagine 375. The GAIN-B domain occupies 250–401 (RISHSSSEHS…SILMSSKPVK (152 aa)). 2 disulfides stabilise this stretch: cysteine 353/cysteine 380 and cysteine 368/cysteine 382. Positions 353-401 (CVSWDPATGQWDESPCTVMSDINSTVKCRCRHTKAVTSFSILMSSKPVK) are GPS. A helical transmembrane segment spans residues 410–430 (FIGLSISIFSLVLCLVIEAIV). Topologically, residues 431 to 444 (WSRVVVTEISYMRH) are cytoplasmic. A helical membrane pass occupies residues 445–465 (VCIVNIAVSLLTANVWFIIGS). Residue asparagine 466 is glycosylated (N-linked (GlcNAc...) asparagine). Residues 466–486 (NFSANVQEDHKWCVAVTFLCH) are Extracellular-facing. Residues 487 to 507 (FFFLSLFFWMLFKALLIVYGI) form a helical membrane-spanning segment. Residues 508 to 518 (LVVFRRMMKSR) lie on the Cytoplasmic side of the membrane. The helical transmembrane segment at 519–539 (MMAIGFAIGYGCPLVIAVITV) threads the bilayer. The Extracellular segment spans residues 540–566 (TVTEPGEGYTRKDACWLNWNQTKALFA). A glycan (N-linked (GlcNAc...) asparagine) is linked at asparagine 559. The helical transmembrane segment at 567–587 (FAIPALAIVAVNLLVVLAVAI) threads the bilayer. At 588 to 611 (NTQRPLIGSSKSQDMAIVFRISKN) the chain is on the cytoplasmic side. The helical transmembrane segment at 612 to 632 (VAILTPLLGLTWGFGLTTLLE) threads the bilayer. The Extracellular segment spans residues 633–635 (GVH). The chain crosses the membrane as a helical span at residues 636–656 (LVFHIIFALLNAFQGFFILLF). Topologically, residues 657 to 698 (GTIMDHKIRDALRMRVSSLKGKSRAAEKVSLSPANGSRILNR) are cytoplasmic.

Belongs to the G-protein coupled receptor 2 family. Adhesion G-protein coupled receptor (ADGR) subfamily. Expressed in squamous epithelia.

The protein localises to the membrane. Orphan receptor. This Mus musculus (Mouse) protein is Adhesion G protein-coupled receptor F4 (Adgrf4).